The chain runs to 37 residues: Large ribosomal subunit protein bL36 (37 aa).

The protein belongs to the bacterial ribosomal protein bL36 family.

The sequence is that of Large ribosomal subunit protein bL36 from Treponema denticola (strain ATCC 35405 / DSM 14222 / CIP 103919 / JCM 8153 / KCTC 15104).